The chain runs to 905 residues: Probable aromatic-L-amino-acid decarboxylase (905 aa).

The interval 250-296 (YLNPIIKTPPHNERVPKMKTNISKTRKKKGKVSDASKDSRPSETKKE) is disordered. The segment covering 280-296 (KVSDASKDSRPSETKKE) has biased composition (basic and acidic residues). Positions 492 and 591 each coordinate pyridoxal 5'-phosphate. The residue at position 648 (K648) is an N6-(pyridoxal phosphate)lysine. A disordered region spans residues 861–905 (HTAEYADPPGKSNKSPQVAAKGELPSAAPPSSRTPNSDISEKSDR). Residues 889–898 (PPSSRTPNSD) show a composition bias toward polar residues.

It belongs to the group II decarboxylase family. Homodimer. Pyridoxal 5'-phosphate serves as cofactor.

It carries out the reaction L-dopa + H(+) = dopamine + CO2. The catalysed reaction is 5-hydroxy-L-tryptophan + H(+) = serotonin + CO2. It participates in catecholamine biosynthesis; dopamine biosynthesis; dopamine from L-tyrosine: step 2/2. Its function is as follows. Catalyzes the decarboxylation of L-3,4-dihydroxyphenylalanine (DOPA) to dopamine, L-5-hydroxytryptophan to serotonin and L-tryptophan to tryptamine. This Caenorhabditis elegans protein is Probable aromatic-L-amino-acid decarboxylase (hdl-1).